Consider the following 225-residue polypeptide: Uracil-DNA glycosylase (225 aa).

Catalysis depends on Asp-65, which acts as the Proton acceptor.

Belongs to the uracil-DNA glycosylase (UDG) superfamily. UNG family.

The protein resides in the cytoplasm. It carries out the reaction Hydrolyzes single-stranded DNA or mismatched double-stranded DNA and polynucleotides, releasing free uracil.. Its function is as follows. Excises uracil residues from the DNA which can arise as a result of misincorporation of dUMP residues by DNA polymerase or due to deamination of cytosine. The protein is Uracil-DNA glycosylase of Clostridium perfringens (strain ATCC 13124 / DSM 756 / JCM 1290 / NCIMB 6125 / NCTC 8237 / Type A).